A 288-amino-acid chain; its full sequence is 2-dehydro-3-deoxyphosphooctonate aldolase (288 aa).

This sequence belongs to the KdsA family.

The protein resides in the cytoplasm. The catalysed reaction is D-arabinose 5-phosphate + phosphoenolpyruvate + H2O = 3-deoxy-alpha-D-manno-2-octulosonate-8-phosphate + phosphate. Its pathway is carbohydrate biosynthesis; 3-deoxy-D-manno-octulosonate biosynthesis; 3-deoxy-D-manno-octulosonate from D-ribulose 5-phosphate: step 2/3. It functions in the pathway bacterial outer membrane biogenesis; lipopolysaccharide biosynthesis. This Syntrophobacter fumaroxidans (strain DSM 10017 / MPOB) protein is 2-dehydro-3-deoxyphosphooctonate aldolase.